The following is a 147-amino-acid chain: Globin, major polymeric component P1 (147 aa).

In terms of domain architecture, Globin spans 2–146 (HLTADQVAAL…ISDACIAGLQ (145 aa)). His-96 is a binding site for heme b.

Belongs to the globin family. In terms of assembly, polymer.

This Glycera dibranchiata (Bloodworm) protein is Globin, major polymeric component P1.